A 317-amino-acid chain; its full sequence is Transaldolase A (317 aa).

The Schiff-base intermediate with substrate role is filled by Lys132.

The protein belongs to the transaldolase family. Type 1 subfamily. In terms of assembly, homodimer.

The protein localises to the cytoplasm. The enzyme catalyses D-sedoheptulose 7-phosphate + D-glyceraldehyde 3-phosphate = D-erythrose 4-phosphate + beta-D-fructose 6-phosphate. It participates in carbohydrate degradation; pentose phosphate pathway; D-glyceraldehyde 3-phosphate and beta-D-fructose 6-phosphate from D-ribose 5-phosphate and D-xylulose 5-phosphate (non-oxidative stage): step 2/3. In terms of biological role, transaldolase is important for the balance of metabolites in the pentose-phosphate pathway. The chain is Transaldolase A (talA) from Pasteurella multocida (strain Pm70).